Here is a 180-residue protein sequence, read N- to C-terminus: Protein GrpE (180 aa).

Basic and acidic residues predominate over residues 1–19; sequence MAEKKRAQEQEKVQEDQKM. The disordered stretch occupies residues 1 to 25; it reads MAEKKRAQEQEKVQEDQKMQNEQNE.

Belongs to the GrpE family. As to quaternary structure, homodimer.

The protein resides in the cytoplasm. Its function is as follows. Participates actively in the response to hyperosmotic and heat shock by preventing the aggregation of stress-denatured proteins, in association with DnaK and GrpE. It is the nucleotide exchange factor for DnaK and may function as a thermosensor. Unfolded proteins bind initially to DnaJ; upon interaction with the DnaJ-bound protein, DnaK hydrolyzes its bound ATP, resulting in the formation of a stable complex. GrpE releases ADP from DnaK; ATP binding to DnaK triggers the release of the substrate protein, thus completing the reaction cycle. Several rounds of ATP-dependent interactions between DnaJ, DnaK and GrpE are required for fully efficient folding. In Nitratiruptor sp. (strain SB155-2), this protein is Protein GrpE.